A 543-amino-acid polypeptide reads, in one-letter code: Thermosome subunit beta (543 aa).

The tract at residues 522-543 (TKSSSSSSNPPKSGSSSESSED) is disordered. Residues 523–543 (KSSSSSSNPPKSGSSSESSED) show a composition bias toward low complexity.

This sequence belongs to the TCP-1 chaperonin family. As to quaternary structure, forms a Heterooligomeric complex of two stacked eight-membered rings. Post-translationally, the N-terminus is blocked.

In terms of biological role, molecular chaperone; binds unfolded polypeptides in vitro, and has a weak ATPase activity. In Thermoplasma acidophilum (strain ATCC 25905 / DSM 1728 / JCM 9062 / NBRC 15155 / AMRC-C165), this protein is Thermosome subunit beta (thsB).